A 447-amino-acid chain; its full sequence is Cytochrome c biogenesis protein CcsB (447 aa).

The next 3 helical transmembrane spans lie at 28–48 (LRLA…GTVI), 87–107 (TWWY…CTFR), and 173–193 (IGPI…IWGA).

Belongs to the Ccs1/CcsB family. May interact with CcsA.

It is found in the cellular thylakoid membrane. Its function is as follows. Required during biogenesis of c-type cytochromes (cytochrome c6 and cytochrome f) at the step of heme attachment. The polypeptide is Cytochrome c biogenesis protein CcsB (Microcystis aeruginosa (strain NIES-843 / IAM M-2473)).